Here is a 106-residue protein sequence, read N- to C-terminus: Probable insulin-like peptide beta-type 1 (106 aa).

An N-terminal signal peptide occupies residues M1 to C19. Residues R20–R51 constitute a propeptide, removed; by convertase egl-3. Disulfide bonds link C60-C89, C72-C102, C76-C103, and C88-C93.

It belongs to the insulin family. In terms of tissue distribution, expressed by ASI and ASJ sensory neurons and weakly by ventral cord motor neurons.

It is found in the secreted. Its function is as follows. Probable insulin-like peptide which negatively regulates synapse development at the neuromuscular junctions. Probably acts as a daf-2/InsR agonist ligand to prevent dauer formation under optimal environmental conditions. In Caenorhabditis elegans, this protein is Probable insulin-like peptide beta-type 1 (ins-4).